A 306-amino-acid chain; its full sequence is Pantothenate kinase (306 aa).

91-98 (GSVAVGKS) is an ATP binding site.

The protein belongs to the prokaryotic pantothenate kinase family.

The protein localises to the cytoplasm. It carries out the reaction (R)-pantothenate + ATP = (R)-4'-phosphopantothenate + ADP + H(+). It functions in the pathway cofactor biosynthesis; coenzyme A biosynthesis; CoA from (R)-pantothenate: step 1/5. The chain is Pantothenate kinase (coaA) from Streptococcus pneumoniae serotype 4 (strain ATCC BAA-334 / TIGR4).